Reading from the N-terminus, the 321-residue chain is Methionyl-tRNA formyltransferase (321 aa).

112–115 contributes to the (6S)-5,6,7,8-tetrahydrofolate binding site; the sequence is SILP.

The protein belongs to the Fmt family.

It catalyses the reaction L-methionyl-tRNA(fMet) + (6R)-10-formyltetrahydrofolate = N-formyl-L-methionyl-tRNA(fMet) + (6S)-5,6,7,8-tetrahydrofolate + H(+). Attaches a formyl group to the free amino group of methionyl-tRNA(fMet). The formyl group appears to play a dual role in the initiator identity of N-formylmethionyl-tRNA by promoting its recognition by IF2 and preventing the misappropriation of this tRNA by the elongation apparatus. This Shewanella pealeana (strain ATCC 700345 / ANG-SQ1) protein is Methionyl-tRNA formyltransferase.